Consider the following 251-residue polypeptide: Probable transcriptional regulatory protein cu0933 (251 aa).

Positions 56-79 (AKKSSVPNDNIERARKRGSGEEAG) are disordered.

The protein belongs to the TACO1 family.

It localises to the cytoplasm. This is Probable transcriptional regulatory protein cu0933 from Corynebacterium urealyticum (strain ATCC 43042 / DSM 7109).